The sequence spans 621 residues: MBT domain-containing protein 1 (621 aa).

Residues 1 to 21 (MEKTKDPADRSSRSERKRRDS) show a composition bias toward basic and acidic residues. The disordered stretch occupies residues 1–55 (MEKTKDPADRSSRSERKRRDSFGMFDGYDSCSEDTSSSSSSDESEEEVAPLPSSL). The segment covering 29-41 (DSCSEDTSSSSSS) has biased composition (low complexity). The FCS-type zinc-finger motif lies at 68–103 (PDGKSGMATCEMCGMVGVRDAFYSKTKRFCSVSCSR). The Zn(2+) site is built by Cys-77, Cys-80, Cys-97, and Cys-101. 4 MBT repeats span residues 164–268 (FSWG…LVPP), 276–373 (TNWK…IGHR), 374–479 (FKRT…LTPP), and 487–583 (FKWF…LQPP). Residues 581–621 (QPPAPQSNKDGQSNVSKQKKKSKSQPYKGHKKNFRKPGNRP) form a disordered region. Residues 597–621 (KQKKKSKSQPYKGHKKNFRKPGNRP) are compositionally biased toward basic residues.

As to quaternary structure, monomer. Component of the NuA4 histone acetyltransferase complex.

It localises to the nucleus. The protein localises to the chromosome. In terms of biological role, chromatin reader component of the NuA4 histone acetyltransferase complex, a multiprotein complex involved in transcriptional activation of select genes principally by acetylation of nucleosomal histones H4 and H2A. The NuA4 complex plays a direct role in repair of DNA double-strand breaks (DSBs) by promoting homologous recombination (HR). MBTD1 specifically recognizes and binds monomethylated and dimethylated 'Lys-20' on histone H4 (H4K20me1 and H4K20me2, respectively). In the NuA4 complex, MBTD1 promotes recruitment of the complex to H4K20me marks by competing with TP53BP1 for binding to H4K20me. Following recruitment to H4K20me at DNA breaks, the NuA4 complex catalyzes acetylation of 'Lys-15' on histone H2A (H2AK15), blocking the ubiquitination mark required for TP53BP1 localization at DNA breaks, thereby promoting homologous recombination (HR). This chain is MBT domain-containing protein 1, found in Xenopus laevis (African clawed frog).